The chain runs to 389 residues: S-adenosylmethionine synthase (389 aa).

Residue H17 participates in ATP binding. D19 contributes to the Mg(2+) binding site. E45 is a K(+) binding site. Residues E58 and Q101 each contribute to the L-methionine site. Positions 101–111 are flexible loop; that stretch reads QSPDISQGVTE. ATP-binding positions include 168–170, 234–235, D243, 249–250, A266, and K270; these read DSK, RF, and RK. D243 serves as a coordination point for L-methionine. K274 lines the L-methionine pocket.

The protein belongs to the AdoMet synthase family. Homotetramer; dimer of dimers. Mg(2+) serves as cofactor. It depends on K(+) as a cofactor.

It localises to the cytoplasm. The catalysed reaction is L-methionine + ATP + H2O = S-adenosyl-L-methionine + phosphate + diphosphate. It participates in amino-acid biosynthesis; S-adenosyl-L-methionine biosynthesis; S-adenosyl-L-methionine from L-methionine: step 1/1. In terms of biological role, catalyzes the formation of S-adenosylmethionine (AdoMet) from methionine and ATP. The overall synthetic reaction is composed of two sequential steps, AdoMet formation and the subsequent tripolyphosphate hydrolysis which occurs prior to release of AdoMet from the enzyme. The polypeptide is S-adenosylmethionine synthase (Geobacter sulfurreducens (strain ATCC 51573 / DSM 12127 / PCA)).